A 187-amino-acid chain; its full sequence is Dihydrofolate reductase type A10 (187 aa).

The DHFR domain maps to 2–174 (NISLIFANEL…YSLSIDKFVR (173 aa)).

It belongs to the dihydrofolate reductase family. In terms of assembly, homodimer.

The enzyme catalyses (6S)-5,6,7,8-tetrahydrofolate + NADP(+) = 7,8-dihydrofolate + NADPH + H(+). Its pathway is cofactor biosynthesis; tetrahydrofolate biosynthesis; 5,6,7,8-tetrahydrofolate from 7,8-dihydrofolate: step 1/1. In terms of biological role, key enzyme in folate metabolism. Catalyzes an essential reaction for de novo glycine and purine synthesis, and for DNA precursor synthesis. This chain is Dihydrofolate reductase type A10 (dfrA10), found in Escherichia coli.